The primary structure comprises 223 residues: Small ribosomal subunit protein uS3 (223 aa).

The KH type-2 domain maps to Val39–Arg107.

The protein belongs to the universal ribosomal protein uS3 family. As to quaternary structure, part of the 30S ribosomal subunit. Forms a tight complex with proteins S10 and S14.

In terms of biological role, binds the lower part of the 30S subunit head. Binds mRNA in the 70S ribosome, positioning it for translation. This Nitrosococcus oceani (strain ATCC 19707 / BCRC 17464 / JCM 30415 / NCIMB 11848 / C-107) protein is Small ribosomal subunit protein uS3.